The chain runs to 149 residues: 3-dehydroquinate dehydratase (149 aa).

The Proton acceptor role is filled by Y25. N76, H82, and D89 together coordinate substrate. H102 functions as the Proton donor in the catalytic mechanism. Substrate-binding positions include L103–S104 and R113.

This sequence belongs to the type-II 3-dehydroquinase family. As to quaternary structure, homododecamer.

It carries out the reaction 3-dehydroquinate = 3-dehydroshikimate + H2O. The protein operates within metabolic intermediate biosynthesis; chorismate biosynthesis; chorismate from D-erythrose 4-phosphate and phosphoenolpyruvate: step 3/7. Catalyzes a trans-dehydration via an enolate intermediate. This is 3-dehydroquinate dehydratase from Acaryochloris marina (strain MBIC 11017).